The chain runs to 341 residues: HMG box-containing protein C10F6.08c (341 aa).

The span at 68 to 77 shows a compositional bias: basic and acidic residues; sequence SEAKSREFGQ. Disordered regions lie at residues 68–195 and 236–341; these read SEAK…SNAK and LTEE…SSNA. Composition is skewed to polar residues over residues 116 to 157 and 165 to 177; these read DTNV…QVVQ and NTDP…ITNL. Low complexity predominate over residues 178–195; that stretch reads KTESSKSSGAKKATSNAK. Residues 195–263 constitute a DNA-binding region (HMG box); that stretch reads KITDTMLFNH…KAREARRRRS (69 aa). 2 stretches are compositionally biased toward basic and acidic residues: residues 238–256 and 269–304; these read EEEK…EKAR and KLEK…GQKE. A phosphothreonine mark is found at Thr-314 and Thr-315. Ser-316 is subject to Phosphoserine.

It localises to the nucleus. The sequence is that of HMG box-containing protein C10F6.08c from Schizosaccharomyces pombe (strain 972 / ATCC 24843) (Fission yeast).